Here is a 370-residue protein sequence, read N- to C-terminus: ADP-ribosylation factor-like protein 13B (370 aa).

S-palmitoyl cysteine attachment occurs at residues Cys-12, Cys-13, Cys-14, and Cys-15. GTP is bound by residues 31 to 38, 75 to 79, and 134 to 137; these read GIGSAGKT, DVGGD, and NNQN. Lys-239 is covalently cross-linked (Glycyl lysine isopeptide (Lys-Gly) (interchain with G-Cter in SUMO)). Residues 255–331 form a disordered region; it reads RNQPPVQPPI…PVSPESNSVK (77 aa). Pro residues predominate over residues 259 to 271; that stretch reads PVQPPIPPDPPSD. Composition is skewed to polar residues over residues 287-303 and 314-328; these read LASS…TPET and RISQ…PESN. Lys-331 participates in a covalent cross-link: Glycyl lysine isopeptide (Lys-Gly) (interchain with G-Cter in SUMO). An RVVP region region spans residues 366 to 369; that stretch reads RVVP.

The protein belongs to the small GTPase superfamily. Arf family. In terms of assembly, monomer. Sumoylation regulates the targeting of membrane sensory receptors to the cilium. In terms of tissue distribution, specifically expressed in ciliated sensory neurons throughout development in both hermaphrodites.

Its subcellular location is the cell projection. The protein localises to the cilium membrane. Cilium-specific protein required to control the microtubule-based, ciliary axoneme structure. Required for normal sensory cilium function. May act by maintaining the association between IFT subcomplexes A and B. This Caenorhabditis elegans protein is ADP-ribosylation factor-like protein 13B (arl-13).